The following is a 572-amino-acid chain: Glutathione hydrolase 1 (572 aa).

A signal peptide spans 1–22 (MSLVRTVTIVLFIIAFLQNAAA). Arg99 provides a ligand contact to L-glutamate. N-linked (GlcNAc...) asparagine glycans are attached at residues Asn171 and Asn222. Thr368 serves as the catalytic Nucleophile. Residues Thr386, Asn388, Glu407, Asp410, 440 to 441 (SS), and 461 to 462 (GG) contribute to the L-glutamate site. Asn505 carries an N-linked (GlcNAc...) asparagine glycan. Residues 552-572 (GGRSELVAVSDPRKGGFPSGY) are disordered.

Belongs to the gamma-glutamyltransferase family. As to expression, expressed in embryo, roots and leaves. In mature plants, expression is restricted to vascular tissues of roots, leaves, flowers and siliques.

The protein resides in the secreted. It localises to the extracellular space. The protein localises to the apoplast. The enzyme catalyses an N-terminal (5-L-glutamyl)-[peptide] + an alpha-amino acid = 5-L-glutamyl amino acid + an N-terminal L-alpha-aminoacyl-[peptide]. It catalyses the reaction glutathione + H2O = L-cysteinylglycine + L-glutamate. It carries out the reaction an S-substituted glutathione + H2O = an S-substituted L-cysteinylglycine + L-glutamate. It functions in the pathway sulfur metabolism; glutathione metabolism. May play a role in preventing oxidative stress by metabolizing extracellular oxidized glutathione (GSSG). This is Glutathione hydrolase 1 (GGT1) from Arabidopsis thaliana (Mouse-ear cress).